We begin with the raw amino-acid sequence, 70 residues long: ATP synthase subunit c (70 aa).

2 helical membrane passes run 4–24 (IATA…NGLI) and 47–67 (FIGI…GFLL).

Belongs to the ATPase C chain family. As to quaternary structure, F-type ATPases have 2 components, F(1) - the catalytic core - and F(0) - the membrane proton channel. F(1) has five subunits: alpha(3), beta(3), gamma(1), delta(1), epsilon(1). F(0) has three main subunits: a(1), b(2) and c(10-14). The alpha and beta chains form an alternating ring which encloses part of the gamma chain. F(1) is attached to F(0) by a central stalk formed by the gamma and epsilon chains, while a peripheral stalk is formed by the delta and b chains.

The protein localises to the cell membrane. Functionally, f(1)F(0) ATP synthase produces ATP from ADP in the presence of a proton or sodium gradient. F-type ATPases consist of two structural domains, F(1) containing the extramembraneous catalytic core and F(0) containing the membrane proton channel, linked together by a central stalk and a peripheral stalk. During catalysis, ATP synthesis in the catalytic domain of F(1) is coupled via a rotary mechanism of the central stalk subunits to proton translocation. Key component of the F(0) channel; it plays a direct role in translocation across the membrane. A homomeric c-ring of between 10-14 subunits forms the central stalk rotor element with the F(1) delta and epsilon subunits. The protein is ATP synthase subunit c of Exiguobacterium sibiricum (strain DSM 17290 / CCUG 55495 / CIP 109462 / JCM 13490 / 255-15).